A 154-amino-acid polypeptide reads, in one-letter code: Large ribosomal subunit protein uL15 (154 aa).

Residues 1–44 (MKLNELGNCKGATRNRKRVGRGIGSGTGKTSGRGVKGQKSRSGV) are disordered. Over residues 21 to 35 (RGIGSGTGKTSGRGV) the composition is skewed to gly residues.

Belongs to the universal ribosomal protein uL15 family. In terms of assembly, part of the 50S ribosomal subunit.

Its function is as follows. Binds to the 23S rRNA. This chain is Large ribosomal subunit protein uL15, found in Bartonella quintana (strain Toulouse) (Rochalimaea quintana).